Reading from the N-terminus, the 264-residue chain is MKQYLDLMKHILAEGVDKSDRTGTGTRSVFGYQMRFDLSKGFPLVSTKKCHMRSIIHELLWFLKGETNVAYLRENKVSIWDEWADDNGDLGPVYGAQWRSWPTQSGDAIDQISQVIAQIKSQPDSRRLIVSAWNVGELDKMALAPCHAFFQFYVADGKLSCQLYQRSCDVFLGLPFNIASYALLTMMVAQQCDLALGDFVWTGGDTHLYSNHMEQTALQLSREPMPLPTMTILRRPESIFDYQFDDFELTNYAPHPHIKAPVAV.

Residue Arg21 participates in dUMP binding. His51 contacts (6R)-5,10-methylene-5,6,7,8-tetrahydrofolate. Residue 126-127 coordinates dUMP; sequence RR. The active-site Nucleophile is Cys146. DUMP contacts are provided by residues 166–169, Asn177, and 207–209; these read RSCD and HLY. (6R)-5,10-methylene-5,6,7,8-tetrahydrofolate is bound at residue Asp169. (6R)-5,10-methylene-5,6,7,8-tetrahydrofolate is bound at residue Ala263.

The protein belongs to the thymidylate synthase family. Bacterial-type ThyA subfamily. As to quaternary structure, homodimer.

The protein resides in the cytoplasm. The catalysed reaction is dUMP + (6R)-5,10-methylene-5,6,7,8-tetrahydrofolate = 7,8-dihydrofolate + dTMP. The protein operates within pyrimidine metabolism; dTTP biosynthesis. In terms of biological role, catalyzes the reductive methylation of 2'-deoxyuridine-5'-monophosphate (dUMP) to 2'-deoxythymidine-5'-monophosphate (dTMP) while utilizing 5,10-methylenetetrahydrofolate (mTHF) as the methyl donor and reductant in the reaction, yielding dihydrofolate (DHF) as a by-product. This enzymatic reaction provides an intracellular de novo source of dTMP, an essential precursor for DNA biosynthesis. In Shewanella baltica (strain OS185), this protein is Thymidylate synthase.